We begin with the raw amino-acid sequence, 274 residues long: tRNA-cytidine(32) 2-sulfurtransferase (274 aa).

The PP-loop motif motif lies at 40–45; the sequence is SGGKDS. The [4Fe-4S] cluster site is built by Cys115, Cys118, and Cys206.

It belongs to the TtcA family. In terms of assembly, homodimer. It depends on Mg(2+) as a cofactor. The cofactor is [4Fe-4S] cluster.

The protein localises to the cytoplasm. It carries out the reaction cytidine(32) in tRNA + S-sulfanyl-L-cysteinyl-[cysteine desulfurase] + AH2 + ATP = 2-thiocytidine(32) in tRNA + L-cysteinyl-[cysteine desulfurase] + A + AMP + diphosphate + H(+). It functions in the pathway tRNA modification. In terms of biological role, catalyzes the ATP-dependent 2-thiolation of cytidine in position 32 of tRNA, to form 2-thiocytidine (s(2)C32). The sulfur atoms are provided by the cysteine/cysteine desulfurase (IscS) system. The sequence is that of tRNA-cytidine(32) 2-sulfurtransferase from Pseudomonas paraeruginosa (strain DSM 24068 / PA7) (Pseudomonas aeruginosa (strain PA7)).